The chain runs to 224 residues: Large ribosomal subunit protein uL16z (224 aa).

This sequence belongs to the universal ribosomal protein uL16 family. In terms of assembly, component of the small ribosomal subunit. Mature ribosomes consist of a small (40S) and a large (60S) subunit. The 40S subunit contains about 33 different proteins and 1 molecule of RNA (18S). The 60S subunit contains about 49 different proteins and 3 molecules of RNA (25S, 5.8S and 5S).

The protein is Large ribosomal subunit protein uL16z (SC34) of Oryza sativa subsp. indica (Rice).